The primary structure comprises 290 residues: Glycine--tRNA ligase alpha subunit (290 aa).

Belongs to the class-II aminoacyl-tRNA synthetase family. In terms of assembly, tetramer of two alpha and two beta subunits.

Its subcellular location is the cytoplasm. The enzyme catalyses tRNA(Gly) + glycine + ATP = glycyl-tRNA(Gly) + AMP + diphosphate. The protein is Glycine--tRNA ligase alpha subunit of Gloeobacter violaceus (strain ATCC 29082 / PCC 7421).